Here is a 415-residue protein sequence, read N- to C-terminus: Tyrosine--tRNA ligase (415 aa).

Tyr34 contributes to the L-tyrosine binding site. The 'HIGH' region signature appears at 39–48; sequence PSADSLHLGN. L-tyrosine contacts are provided by Tyr162 and Gln166. Residues 224–228 carry the 'KMSKS' region motif; the sequence is KFGKS. Lys227 is a binding site for ATP. One can recognise an S4 RNA-binding domain in the interval 346–413; that stretch reads IKIIDLLNLA…KRNYFLILWN (68 aa).

Belongs to the class-I aminoacyl-tRNA synthetase family. TyrS type 1 subfamily. In terms of assembly, homodimer.

Its subcellular location is the cytoplasm. It catalyses the reaction tRNA(Tyr) + L-tyrosine + ATP = L-tyrosyl-tRNA(Tyr) + AMP + diphosphate + H(+). In terms of biological role, catalyzes the attachment of tyrosine to tRNA(Tyr) in a two-step reaction: tyrosine is first activated by ATP to form Tyr-AMP and then transferred to the acceptor end of tRNA(Tyr). In Ureaplasma parvum serovar 3 (strain ATCC 27815 / 27 / NCTC 11736), this protein is Tyrosine--tRNA ligase.